We begin with the raw amino-acid sequence, 822 residues long: Integrator complex assembly factor BRAT1 (822 aa).

The required for interaction with NDFIP1 stretch occupies residues 100–200 (LGLFGESGAP…WPMCAQKIVN (101 aa)). HEAT repeat units follow at residues 495 to 531 (LLFLGELFPILQKRLCSPCWEVRDSALEFLTHLIRHW) and 544 to 576 (SEVPTLALQLLQDPESYVRASAVGAAGQLSSQG). S743 is subject to Phosphoserine. The short motif at 820-822 (DCY) is the BRAT1-like motif element. C821 contributes to the Zn(2+) binding site.

Belongs to the BRAT1 family. As to quaternary structure, part of the multiprotein complex composed of BRAT1, WDR73, as well as integrator complex subunits INTS9 and INTS11. Interacts with BRCA1 and ATM. Interacts with MTOR and RPTOR. Interacts with NDFIP1. Interacts with SMC1A and PRKDC. In terms of processing, ubiquitinated by NEDD4, NEDD4L and ITCH; mono- and polyubiquitinated forms are detected. In terms of tissue distribution, high levels detected in the cortex and much lower levels detected in the cerebellum, spinal cord and lung (at protein level).

The protein localises to the nucleus. It is found in the cytoplasm. Its function is as follows. Component of a multiprotein complex required for the assembly of the RNA endonuclease module of the integrator complex. Associates with INTS9 and INTS11 in the cytoplasm and blocks the active site of INTS11 to inhibit the endonuclease activity of INTS11 before formation of the full integrator complex. Following dissociation of WDR73 of the complex, BRAT1 facilitates the nuclear import of the INTS9-INTS11 heterodimer. In the nucleus, INTS4 is integrated to the INTS9-INTS11 heterodimer and BRAT1 is released from the mature RNA endonuclease module by inositol hexakisphosphate (InsP6). BRAT1 is also involved in DNA damage response; activates kinases ATM, SMC1A and PRKDC by modulating their phosphorylation status following ionizing radiation (IR) stress. Plays a role in regulating mitochondrial function and cell proliferation. Required for protein stability of MTOR and MTOR-related proteins, and cell cycle progress by growth factors. The polypeptide is Integrator complex assembly factor BRAT1 (Mus musculus (Mouse)).